The following is a 121-amino-acid chain: Large ribosomal subunit protein bL12 (121 aa).

This sequence belongs to the bacterial ribosomal protein bL12 family. In terms of assembly, homodimer. Part of the ribosomal stalk of the 50S ribosomal subunit. Forms a multimeric L10(L12)X complex, where L10 forms an elongated spine to which 2 to 4 L12 dimers bind in a sequential fashion. Binds GTP-bound translation factors.

Forms part of the ribosomal stalk which helps the ribosome interact with GTP-bound translation factors. Is thus essential for accurate translation. In Streptococcus pyogenes serotype M3 (strain ATCC BAA-595 / MGAS315), this protein is Large ribosomal subunit protein bL12.